The chain runs to 373 residues: UDP-N-acetylenolpyruvoylglucosamine reductase (373 aa).

Residues 30–203 (LACTANSVVT…SRVGFRLHTD (174 aa)) form the FAD-binding PCMH-type domain. Arg-180 is a catalytic residue. The active-site Proton donor is Ser-258. Residue Glu-356 is part of the active site.

The protein belongs to the MurB family. FAD is required as a cofactor.

It is found in the cytoplasm. It carries out the reaction UDP-N-acetyl-alpha-D-muramate + NADP(+) = UDP-N-acetyl-3-O-(1-carboxyvinyl)-alpha-D-glucosamine + NADPH + H(+). The protein operates within cell wall biogenesis; peptidoglycan biosynthesis. In terms of biological role, cell wall formation. This chain is UDP-N-acetylenolpyruvoylglucosamine reductase, found in Psychrobacter arcticus (strain DSM 17307 / VKM B-2377 / 273-4).